Reading from the N-terminus, the 333-residue chain is Ribose-phosphate pyrophosphokinase (333 aa).

ATP is bound at residue Asp-58–Glu-60. The Mg(2+) site is built by His-151 and Asp-190. Lys-214 is a catalytic residue. D-ribose 5-phosphate is bound by residues Arg-216, Asp-240, and Asp-244–Thr-248.

It belongs to the ribose-phosphate pyrophosphokinase family. Class I subfamily. Homohexamer. Mg(2+) is required as a cofactor.

The protein resides in the cytoplasm. It catalyses the reaction D-ribose 5-phosphate + ATP = 5-phospho-alpha-D-ribose 1-diphosphate + AMP + H(+). It functions in the pathway metabolic intermediate biosynthesis; 5-phospho-alpha-D-ribose 1-diphosphate biosynthesis; 5-phospho-alpha-D-ribose 1-diphosphate from D-ribose 5-phosphate (route I): step 1/1. Its function is as follows. Involved in the biosynthesis of the central metabolite phospho-alpha-D-ribosyl-1-pyrophosphate (PRPP) via the transfer of pyrophosphoryl group from ATP to 1-hydroxyl of ribose-5-phosphate (Rib-5-P). The sequence is that of Ribose-phosphate pyrophosphokinase from Synechocystis sp. (strain ATCC 27184 / PCC 6803 / Kazusa).